The following is a 467-amino-acid chain: MVAITSLAQSLEHLKRKDYSCLELVETLIARCEAAKSLNALLATDWDGLRRSAKKIDRHGNAGVGLCGIPLCFKANIATGVFPTSAATPALINHLPKIPSRVAERLFSAGALPGASGNMHELSFGITSNNYATGAVRNPWNPDLIPGGSSGGVAAAVASRLMLGGIGTDTGASVRLPAALCGVVGFRPTLGRYPGDRIIPVSPTRDTPGIIAQCVADVVILDRIISGTPERIPPVPLKGLRIGLPTTYFYDDLDADVALAAETTIRLLANKGVTFVEANIPHLDELNKGASFPVALYEFPHALKQYLDDFVKTVSFSDVIKGIRSPDVANIANAQIDGHQISKAEYELARHSFRPRLQATYRNYFKLNRLDAILFPTAPLVARPIGQDSSVIHNGTMLDTFKIYVRNVDPSSNAGLPGLSIPVCLTPDRLPVGMEIDGLADSDQRLLAIGGALEEAIGFRYFAGLPN.

Residues Lys-74 and Ser-149 each act as charge relay system in the active site. The active-site Acyl-ester intermediate is the Ser-173.

This sequence belongs to the amidase family.

It participates in plant hormone metabolism; auxin biosynthesis. Functionally, hydrolyzes indole-3-acetamide (IAM) into indole-3-acetic acid (IAA). The chain is Indoleacetamide hydrolase (tms2) from Rhizobium radiobacter (Agrobacterium tumefaciens).